The sequence spans 698 residues: Dual trans-enoyl reductase/FAD-dependent monooxygenase tazHJ (698 aa).

Residues 54 to 57 (STAT), 78 to 81 (SPRH), Tyr-96, and 279 to 280 (IA) contribute to the NADP(+) site. FAD is bound by residues Glu-299, Gly-312, and Arg-372. Arg-455 is an active-site residue. Residues Asp-571 and Ala-584 each contribute to the FAD site.

The protein in the N-terminal section; belongs to the zinc-containing alcohol dehydrogenase family. This sequence in the C-terminal section; belongs to the paxM FAD-dependent monooxygenase family.

Its pathway is secondary metabolite biosynthesis. Its function is as follows. Dual trans-enoyl reductase/FAD-dependent monooxygenase; part of the gene cluster that mediates the biosynthesis of azaterrilone A and other azaphilones, a class of fungal metabolites characterized by a highly oxygenated pyrano-quinone bicyclic core and exhibiting a broad range of bioactivities. The first step of the pathway begins with the non-reducing polyketide synthase tazA that assembles one acetyl-CoA starter unit, five malonyl-CoA units, and catalyzes a series of Claisen condensations, methylation, PT-mediated cyclization, and finally releases the first hexaketide precursor through the R-domain. The tazA product then undergoes reduction on its terminal ketone and the following pyran-ring formation by yet undetermined enzyme(s). Dehydration and enoyl reduction, possibly involving the trans-enoyl reductase tazE leads to the next intermediate. TazD is predicted as an acetyltransferase and might catalyze the acetylation steps leading to the synthesis of azaterrilone A. Azaterrilone A is not the final product of the taz pathway and both the highly reducing polyketide synthase tazB and the dual enzyme tazHJ catalyze late steps of the pathway, leading to the production of the 2 final stereoisomers that contain additional polyketide modification whose structures have still to be determined. This chain is Dual trans-enoyl reductase/FAD-dependent monooxygenase tazHJ, found in Aspergillus terreus (strain NIH 2624 / FGSC A1156).